The following is a 605-amino-acid chain: MVKDRVIELFRQALAKGAAEGRWPALEASFSVEAPRDPKHGDFAVNAAMVLAKAAGKPPRDLAQAIAAEVRAVDAQHEIAGLEVAGPGFINVRLAPDVWLRALGRVVAEGTAYGRTEVGRGKKVIVEYVSANPTGPMHVGHGRNAVVGDGVQSLLRWAGFEVTREYYVNDYGAQVQTLARSVHLRYQELFGRQVTMPPKSYPGEYVKDVAAALKAEHGDRWLDAPEAEWLALFRDRAVEHVLGLIREDLRAVNIEFDRWYSEKALYESGTVDRFLRFLAEKDLVYVGKLPPPKSKKGQPAPAQAASNSAHDLGEEGIAASDDLTLFRSSQYGDEVDRPVKKADGTTTYFCADIAYHWDKRQRADALVDVLGADHGGYVPRLEAALEALGASRKDLHVVLIQMVNLTRGGEAVKMSKRAGTVVSLREVVDEVGRDATRFIFLTRRSDAQLDFDIELAKRQTLDNPVFYVQYGHARLAQIFAKAREAGAPVPEFDLEAARTLTSAEEQDLIRRIVAFPDMLAAAALAYEPHRVAFYLQETIAAFHSYYTQGKRTGERVISADARKTAGRLFLCRALKQVLANGLGLLGVAAPERMESPETRDLADDV.

The short motif at 131-141 (ANPTGPMHVGH) is the 'HIGH' region element. The segment at 290–309 (PPPKSKKGQPAPAQAASNSA) is disordered. The span at 298 to 309 (QPAPAQAASNSA) shows a compositional bias: low complexity.

The protein belongs to the class-I aminoacyl-tRNA synthetase family. In terms of assembly, monomer.

The protein resides in the cytoplasm. It carries out the reaction tRNA(Arg) + L-arginine + ATP = L-arginyl-tRNA(Arg) + AMP + diphosphate. This is Arginine--tRNA ligase from Anaeromyxobacter sp. (strain Fw109-5).